A 376-amino-acid chain; its full sequence is 23S rRNA (uracil(747)-C(5))-methyltransferase RlmC (376 aa).

Positions 3, 11, 14, and 87 each coordinate [4Fe-4S] cluster. 4 residues coordinate S-adenosyl-L-methionine: Q212, F241, E262, and N307. The Nucleophile role is filled by C334.

This sequence belongs to the class I-like SAM-binding methyltransferase superfamily. RNA M5U methyltransferase family. RlmC subfamily.

The catalysed reaction is uridine(747) in 23S rRNA + S-adenosyl-L-methionine = 5-methyluridine(747) in 23S rRNA + S-adenosyl-L-homocysteine + H(+). Catalyzes the formation of 5-methyl-uridine at position 747 (m5U747) in 23S rRNA. The chain is 23S rRNA (uracil(747)-C(5))-methyltransferase RlmC from Yersinia pestis bv. Antiqua (strain Antiqua).